Here is a 181-residue protein sequence, read N- to C-terminus: BURP domain-containing protein 7 (181 aa).

Residues 1–21 form the signal peptide; that stretch reads MARSLAALLLLLVAAAGDSHA. The BURP domain occupies 65–181; sequence FFLEKDLFPG…RRGRRTGWRP (117 aa). The tract at residues 112-181 is disordered; sequence QLSVPAGSPA…RRGRRTGWRP (70 aa). Residues 128–143 are compositionally biased toward basic residues; it reads RPRRSPARRSNARRRS. Positions 144–157 are enriched in low complexity; the sequence is SPWWSSPRPASAPA. Residues 170–181 are compositionally biased toward basic residues; that stretch reads GRRRGRRTGWRP.

Expressed in roots, stems, leaves and shoot.

This chain is BURP domain-containing protein 7 (BURP7), found in Oryza sativa subsp. japonica (Rice).